Consider the following 796-residue polypeptide: Inactive dipeptidyl peptidase 10 (796 aa).

At 1 to 34 (MNQTASVSHHIKCQPSKTIKELGSNSPPQRNWKG) the chain is on the cytoplasmic side. The tract at residues 1 to 55 (MNQTASVSHHIKCQPSKTIKELGSNSPPQRNWKGIAIALLVILVVCSLITMSVIL) is mediates effects on KCND2. A helical; Signal-anchor for type II membrane protein membrane pass occupies residues 35–55 (IAIALLVILVVCSLITMSVIL). The Extracellular segment spans residues 56 to 796 (LTPDELTNSS…VLPQEPEEDE (741 aa)). N-linked (GlcNAc...) asparagine glycans are attached at residues Asn-63, Asn-90, Asn-111, and Asn-119. A phosphotyrosine mark is found at Tyr-138 and Tyr-143. N-linked (GlcNAc...) asparagine glycosylation is found at Asn-257, Asn-342, and Asn-748.

The protein belongs to the peptidase S9B family. DPPIV subfamily. As to quaternary structure, may form oligomers. Interacts with KCND1. Interacts with KCND2. Identified in a complex with KCND2 and KCNIP3. N-glycosylation is important for cell surface expression, specially at Asn-257, which is crucial. As to expression, detected in brain cortex, hippocampus, thalamus and cerebellum Purkinje cells (at protein level).

The protein resides in the cell membrane. Functionally, promotes cell surface expression of the potassium channel KCND2. Modulates the activity and gating characteristics of the potassium channel KCND2. Has no dipeptidyl aminopeptidase activity. This Rattus norvegicus (Rat) protein is Inactive dipeptidyl peptidase 10 (Dpp10).